The sequence spans 336 residues: Holliday junction branch migration complex subunit RuvB (336 aa).

Positions 1 to 183 (MTEEHLTSQE…FGIVEHMQYY (183 aa)) are large ATPase domain (RuvB-L). ATP contacts are provided by residues leucine 22, arginine 23, glycine 64, lysine 67, threonine 68, threonine 69, 130-132 (EDF), arginine 173, tyrosine 183, and arginine 220. Position 68 (threonine 68) interacts with Mg(2+). Residues 184–254 (QVEDLEKIIL…TTAMALKQLQ (71 aa)) form a small ATPAse domain (RuvB-S) region. Residues 257 to 336 (SAGLDQTDRK…LNLPLPGEEE (80 aa)) form a head domain (RuvB-H) region. DNA is bound by residues arginine 293 and arginine 317.

The protein belongs to the RuvB family. In terms of assembly, homohexamer. Forms an RuvA(8)-RuvB(12)-Holliday junction (HJ) complex. HJ DNA is sandwiched between 2 RuvA tetramers; dsDNA enters through RuvA and exits via RuvB. An RuvB hexamer assembles on each DNA strand where it exits the tetramer. Each RuvB hexamer is contacted by two RuvA subunits (via domain III) on 2 adjacent RuvB subunits; this complex drives branch migration. In the full resolvosome a probable DNA-RuvA(4)-RuvB(12)-RuvC(2) complex forms which resolves the HJ.

The protein resides in the cytoplasm. It carries out the reaction ATP + H2O = ADP + phosphate + H(+). In terms of biological role, the RuvA-RuvB-RuvC complex processes Holliday junction (HJ) DNA during genetic recombination and DNA repair, while the RuvA-RuvB complex plays an important role in the rescue of blocked DNA replication forks via replication fork reversal (RFR). RuvA specifically binds to HJ cruciform DNA, conferring on it an open structure. The RuvB hexamer acts as an ATP-dependent pump, pulling dsDNA into and through the RuvAB complex. RuvB forms 2 homohexamers on either side of HJ DNA bound by 1 or 2 RuvA tetramers; 4 subunits per hexamer contact DNA at a time. Coordinated motions by a converter formed by DNA-disengaged RuvB subunits stimulates ATP hydrolysis and nucleotide exchange. Immobilization of the converter enables RuvB to convert the ATP-contained energy into a lever motion, pulling 2 nucleotides of DNA out of the RuvA tetramer per ATP hydrolyzed, thus driving DNA branch migration. The RuvB motors rotate together with the DNA substrate, which together with the progressing nucleotide cycle form the mechanistic basis for DNA recombination by continuous HJ branch migration. Branch migration allows RuvC to scan DNA until it finds its consensus sequence, where it cleaves and resolves cruciform DNA. In Lactobacillus delbrueckii subsp. bulgaricus (strain ATCC 11842 / DSM 20081 / BCRC 10696 / JCM 1002 / NBRC 13953 / NCIMB 11778 / NCTC 12712 / WDCM 00102 / Lb 14), this protein is Holliday junction branch migration complex subunit RuvB.